Reading from the N-terminus, the 455-residue chain is UDP-N-acetylmuramoylalanine--D-glutamate ligase (455 aa).

Position 120 to 126 (120 to 126 (GSNGKTT)) interacts with ATP.

It belongs to the MurCDEF family.

It localises to the cytoplasm. It catalyses the reaction UDP-N-acetyl-alpha-D-muramoyl-L-alanine + D-glutamate + ATP = UDP-N-acetyl-alpha-D-muramoyl-L-alanyl-D-glutamate + ADP + phosphate + H(+). It functions in the pathway cell wall biogenesis; peptidoglycan biosynthesis. Cell wall formation. Catalyzes the addition of glutamate to the nucleotide precursor UDP-N-acetylmuramoyl-L-alanine (UMA). The chain is UDP-N-acetylmuramoylalanine--D-glutamate ligase from Pediococcus pentosaceus (strain ATCC 25745 / CCUG 21536 / LMG 10740 / 183-1w).